Consider the following 187-residue polypeptide: Calcium and integrin-binding family member 2 (187 aa).

EF-hand domains are found at residues 66–101 (RENP…LCES), 103–138 (PREL…LTKS), and 144–179 (EVVL…APDF). 9 residues coordinate Ca(2+): aspartate 116, asparagine 118, aspartate 120, aspartate 127, aspartate 157, aspartate 159, aspartate 161, lysine 163, and aspartate 168.

As to quaternary structure, monomer. Homodimer. Interacts with WHRN and MYO7A. Interacts with ITGA2B (via C-terminus cytoplasmic tail region); this interaction is stabilized/increased in a calcium and magnesium-dependent manner. Interacts with ITGA7 (via C-terminus cytoplasmic tail region); this interaction is stabilized/increased in a calcium and magnesium-dependent manner. Interacts with TMC1. Interacts with TMC2. Interacts with PIEZO1. Expressed in inner and outer segments of photoreceptor cells, as well as in the pigmented epithelium. Also observed in the inner and outer plexiform layers and in the ganglion cell layer (at protein level). Expressed in sensory hair cell stereocilia, with expression mainly at the basal body of the kinocilium and in the hair bundle stereocilia; and the apical surface of hair cells (at protein level). Located in the tip region of the stereocilia and at the apical surface of hair cells around the cuticular plate (at protein level). Not expressed in the hair bundles of the vestibular hair cells. Strongly expressed in skeletal muscles, brain, kidney and liver. Expressed in the skeletal muscle, retina and cochlea. Expressed in megakaryocytes and endothelial cells. Expressed in heart, spleen, lung, and inner ear. In the inner ear, expressed in the vestibule, basilar membrane and spiral ganglion cells. Expressed in the supporting cells in both the organ of Corti and the vestibular sensory epithelia.

It is found in the cytoplasm. Its subcellular location is the cell projection. The protein localises to the stereocilium. The protein resides in the photoreceptor inner segment. It localises to the cilium. It is found in the photoreceptor outer segment. Its subcellular location is the cell membrane. The protein localises to the sarcolemma. Calcium- and integrin-binding protein that plays a role in intracellular calcium homeostasis. Acts as an auxiliary subunit of the sensory mechanoelectrical transduction (MET) channel in hair cells. Essential for mechanoelectrical transduction (MET) currents in auditory hair cells and thereby required for hearing. Regulates the function of hair cell mechanotransduction by controlling the distribution of transmembrane channel-like proteins TMC1 and TMC2, and by regulating the function of the MET channels in hair cells. Required for the maintenance of auditory hair cell stereocilia bundle morphology and function and for hair-cell survival in the cochlea. Critical for proper photoreceptor cell maintenance and function. Plays a role in intracellular calcium homeostasis by decreasing ATP-induced calcium release. Seems to be dispensable for vestibular functions. The protein is Calcium and integrin-binding family member 2 (Cib2) of Mus musculus (Mouse).